We begin with the raw amino-acid sequence, 180 residues long: Large ribosomal subunit protein uL5c (180 aa).

Belongs to the universal ribosomal protein uL5 family. In terms of assembly, part of the 50S ribosomal subunit; contacts the 5S rRNA.

The protein localises to the plastid. It localises to the chloroplast. Binds 5S rRNA, forms part of the central protuberance of the 50S subunit. This Tetradesmus obliquus (Green alga) protein is Large ribosomal subunit protein uL5c (rpl5).